The primary structure comprises 131 residues: Small ribosomal subunit protein uS8 (131 aa).

This sequence belongs to the universal ribosomal protein uS8 family. As to quaternary structure, part of the 30S ribosomal subunit. Contacts proteins S5 and S12.

In terms of biological role, one of the primary rRNA binding proteins, it binds directly to 16S rRNA central domain where it helps coordinate assembly of the platform of the 30S subunit. This chain is Small ribosomal subunit protein uS8, found in Wolbachia pipientis subsp. Culex pipiens (strain wPip).